The primary structure comprises 464 residues: UDP-glucose:undecaprenyl-phosphate glucose-1-phosphate transferase (464 aa).

Over 1–15 (MTNLKKRERAKTNAS) the chain is Cytoplasmic. The helical transmembrane segment at 16 to 36 (LISMVQRFSDITIMFAGLWLV) threads the bilayer. The Periplasmic segment spans residues 37 to 38 (CE). A helical transmembrane segment spans residues 39–59 (VSGLSFLYMHLLVALITLVVF). The Cytoplasmic segment spans residues 60–80 (QMLGGITDFYRSWRGVRAATE). The chain crosses the membrane as a helical span at residues 81 to 101 (FALLLQNWTLSVIFSAGLVAF). Residues 102–104 (NND) lie on the Periplasmic side of the membrane. Residues 105 to 125 (FDTQLKIWLAWYALTSIGLVV) traverse the membrane as a helical segment. The Cytoplasmic portion of the chain corresponds to 126–278 (CRSCIRIGAG…VNRLLKRAED (153 aa)). The helical transmembrane segment at 279–299 (IVLATLILLLISPVLCCIALA) threads the bilayer. Residues 300–464 (VKLSSPGPVI…FKGFVNKAAY (165 aa)) lie on the Periplasmic side of the membrane.

The protein belongs to the bacterial sugar transferase family.

The protein localises to the cell inner membrane. It carries out the reaction di-trans,octa-cis-undecaprenyl phosphate + UDP-alpha-D-glucose = alpha-D-glucosyl di-trans,octa-cis-undecaprenyl diphosphate + UMP. It participates in exopolysaccharide biosynthesis; colanic acid biosynthesis. Functionally, is the initiating enzyme for colanic acid (CA) synthesis. Catalyzes the transfer of the glucose-1-phosphate moiety from UDP-Glc onto the carrier lipid undecaprenyl phosphate (C55-P), forming a phosphoanhydride bond yielding to glucosyl-pyrophosphoryl-undecaprenol (Glc-PP-C55). Also possesses a weak galactose-1-P transferase activity. The chain is UDP-glucose:undecaprenyl-phosphate glucose-1-phosphate transferase (wcaJ) from Escherichia coli (strain K12).